Consider the following 74-residue polypeptide: UPF0057 membrane protein At4g30660 (74 aa).

2 consecutive transmembrane segments (helical) span residues 4–24 (NCEI…GVCF) and 37–57 (LVLT…VIVF).

This sequence belongs to the UPF0057 (PMP3) family.

It localises to the membrane. The chain is UPF0057 membrane protein At4g30660 from Arabidopsis thaliana (Mouse-ear cress).